Here is a 222-residue protein sequence, read N- to C-terminus: Thiopurine S-methyltransferase (222 aa).

The S-adenosyl-L-methionine site is built by Trp-10, Leu-45, Glu-66, and Arg-123.

This sequence belongs to the class I-like SAM-binding methyltransferase superfamily. TPMT family.

The protein resides in the cytoplasm. The enzyme catalyses S-adenosyl-L-methionine + a thiopurine = S-adenosyl-L-homocysteine + a thiopurine S-methylether.. In Pseudomonas fluorescens (strain ATCC BAA-477 / NRRL B-23932 / Pf-5), this protein is Thiopurine S-methyltransferase.